We begin with the raw amino-acid sequence, 80 residues long: Large ribosomal subunit protein uL24 (80 aa).

Residues 53–80 (HMRPTQGQTQGSIIEREFPIHSSNVKKS) are disordered.

The protein belongs to the universal ribosomal protein uL24 family. As to quaternary structure, part of the 50S ribosomal subunit.

Its function is as follows. One of two assembly initiator proteins, it binds directly to the 5'-end of the 23S rRNA, where it nucleates assembly of the 50S subunit. In terms of biological role, one of the proteins that surrounds the polypeptide exit tunnel on the outside of the subunit. In Pelodictyon phaeoclathratiforme (strain DSM 5477 / BU-1), this protein is Large ribosomal subunit protein uL24.